Consider the following 455-residue polypeptide: Golgi pH regulator (455 aa).

The next 5 helical transmembrane spans lie at 5–25 (IDSS…WLFF), 46–66 (VTFA…LGVL), 79–99 (LCVI…YFIV), 114–134 (CLLW…FPIL), and 150–170 (VGVI…VNCP). N-linked (GlcNAc...) asparagine glycosylation is found at Asn-180 and Asn-243. The next 4 membrane-spanning stretches (helical) occupy residues 290-310 (GYFF…NIVF), 343-363 (ISFI…LITL), 378-398 (VIVL…VLLI), and 425-445 (WFDV…YLAH).

This sequence belongs to the Golgi pH regulator (TC 1.A.38) family. As to quaternary structure, homotrimer. Interacts with RABL3; the interaction stabilizes GPR89A.

It localises to the golgi apparatus membrane. The enzyme catalyses iodide(out) = iodide(in). The catalysed reaction is chloride(in) = chloride(out). It catalyses the reaction bromide(in) = bromide(out). It carries out the reaction fluoride(in) = fluoride(out). Voltage-gated channel that enables the transfer of monoatomic anions such as iodide, chloride, bromide and fluoride which may function in counter-ion conductance and participates in Golgi acidification. Plays a role in lymphocyte development, probably by acting as a RABL3 effector in hematopoietic cells. This chain is Golgi pH regulator, found in Bos taurus (Bovine).